Here is a 624-residue protein sequence, read N- to C-terminus: Heat shock factor protein 5 (624 aa).

The DNA-binding element occupies 11-228 (NPNNFPAKLW…FHRSFRRDNL (218 aa)). Disordered regions lie at residues 52-77 (LSPPGPGAGGAGGAGSSGGGGGSGVG), 112-138 (GAAGPGPGPGAGGPAGDGPLHHFHSPH), 186-214 (SASASTSPLQHQDPPPQPAGPRPEQHGPV), 429-461 (CPSSQANRGQHILPNANSSNPSSTSQASQLEPL), and 572-605 (GPANKSTKDTGLSTPARYRERRSNSQGKSPDLHL). 2 stretches are compositionally biased toward gly residues: residues 58–77 (GAGGAGGAGSSGGGGGSGVG) and 112–127 (GAAGPGPGPGAGGPAG). 2 stretches are compositionally biased toward low complexity: residues 186–197 (SASASTSPLQHQ) and 442–457 (PNANSSNPSSTSQASQ). Phosphoserine is present on Ser-600.

The protein belongs to the HSF family. Homooligomer. In terms of tissue distribution, highly expressed in testis particularly in spermatocytes (at protein level). Not expressed in fetal testis and ovary.

Its subcellular location is the nucleus. It is found in the chromosome. Its function is as follows. DNA-binding transcription factor that is essential for male fertility, spermatogenesis and meiotic prophase progression in spermatocytes under non-stress conditions. Positvely and negatively regulates gene expression to ensure progression of meiotic prophase beyond pachytene stage in spermatocytes. Plays a role in male germline meiotic sex chromosome remodeling and silencing through regulation of SMARCA4. The polypeptide is Heat shock factor protein 5 (Hsf5) (Mus musculus (Mouse)).